Reading from the N-terminus, the 147-residue chain is MVKSKSPKGIYAARKLRLKRLKFRRSQRKYKTKILKLKEKYDPLGGAPMARGIVLEKVGIESRQPNSAVRKCVRVQLVRNGRVVTAFVPGDGGVNFIDEHDEVIITGIGGTLGRSMGDLPGVRYKVIMVNGVSLDALYKGKKQKPVR.

It belongs to the universal ribosomal protein uS12 family. As to quaternary structure, part of the 30S ribosomal subunit.

Functionally, with S4 and S5 plays an important role in translational accuracy. Located at the interface of the 30S and 50S subunits. The sequence is that of Small ribosomal subunit protein uS12 from Saccharolobus solfataricus (strain ATCC 35092 / DSM 1617 / JCM 11322 / P2) (Sulfolobus solfataricus).